The following is a 328-amino-acid chain: Homoarginine-6-hydroxylase 2-ODD-233 (328 aa).

Positions 183 to 288 (FWVCRLIGYP…VSVAFFYESN (106 aa)) constitute a Fe2OG dioxygenase domain. Fe cation-binding residues include His210, Asp212, and His268. Residue Arg278 coordinates 2-oxoglutarate.

The protein belongs to the iron/ascorbate-dependent oxidoreductase family. The cofactor is Fe(2+). Requires L-ascorbate as cofactor. As to expression, expressed in roots and shoots.

Its subcellular location is the cytoplasm. The catalysed reaction is L-homoarginine + 2-oxoglutarate + O2 = 6-hydroxy-L-homoarginine + succinate + CO2. It carries out the reaction melatonin + 2-oxoglutarate + O2 = 2-hydroxymelatonin + succinate + CO2. Functionally, 2-oxoglutarate-dependent dioxygenase catalyzing homoarginine 6-hydroxylation thus producing 6-hydroxy-L-homoarginine. Guanidine (Gd) is in turn synthesized by the spontaneous conversion of 6-hydroxy-L-homoarginine to (S)-2-amino-6-oxohexanoate (RHEA:79843); guanidine is a nitrogen-rich compound that can serve as a defense or signaling substance. Involved in melatonin degradation. Catalyzes the hydroxylation of melatonin to produce 2-hydroxymelatonin. This chain is Homoarginine-6-hydroxylase 2-ODD-233, found in Oryza sativa subsp. japonica (Rice).